The primary structure comprises 476 residues: Probable pectin lyase F (476 aa).

Residues 1–20 (MTLLRHLLTATALLGASVQA) form the signal peptide. Residues Cys84 and Cys108 are joined by a disulfide bond. 2 N-linked (GlcNAc...) asparagine glycosylation sites follow: Asn103 and Asn131. Arg258 is an active-site residue. Residues Asn277 and Asn318 are each glycosylated (N-linked (GlcNAc...) asparagine). A disulfide bond links Cys325 and Cys333. The N-linked (GlcNAc...) asparagine glycan is linked to Asn385. A disordered region spans residues 412-476 (FVPAYSEAGP…HHHQGHGRGY (65 aa)). Over residues 426–453 (VPTQPSWSWRTVTNGPAPTGAPSDSPSA) the composition is skewed to polar residues. The segment covering 465–476 (NKHHHQGHGRGY) has biased composition (basic residues).

This sequence belongs to the polysaccharide lyase 1 family.

The protein localises to the secreted. It carries out the reaction Eliminative cleavage of (1-&gt;4)-alpha-D-galacturonan methyl ester to give oligosaccharides with 4-deoxy-6-O-methyl-alpha-D-galact-4-enuronosyl groups at their non-reducing ends.. Pectinolytic enzymes consist of four classes of enzymes: pectin lyase, polygalacturonase, pectin methylesterase and rhamnogalacturonase. Among pectinolytic enzymes, pectin lyase is the most important in depolymerization of pectin, since it cleaves internal glycosidic bonds of highly methylated pectins. This Aspergillus niger (strain ATCC MYA-4892 / CBS 513.88 / FGSC A1513) protein is Probable pectin lyase F (pelF).